We begin with the raw amino-acid sequence, 153 residues long: Transcriptional repressor NrdR (153 aa).

A zinc finger lies at 3-34; sequence CPFCGYEDSKVVDTRPTNEGKTIKRRRECLKC. In terms of domain architecture, ATP-cone spans 49–139; it reads ILVIKKDNRR…VYRQFKDINT (91 aa).

Belongs to the NrdR family. Zn(2+) is required as a cofactor.

In terms of biological role, negatively regulates transcription of bacterial ribonucleotide reductase nrd genes and operons by binding to NrdR-boxes. The chain is Transcriptional repressor NrdR from Caldicellulosiruptor bescii (strain ATCC BAA-1888 / DSM 6725 / KCTC 15123 / Z-1320) (Anaerocellum thermophilum).